We begin with the raw amino-acid sequence, 78 residues long: Small ribosomal subunit protein uS17 (78 aa).

Belongs to the universal ribosomal protein uS17 family. As to quaternary structure, part of the 30S ribosomal subunit.

Functionally, one of the primary rRNA binding proteins, it binds specifically to the 5'-end of 16S ribosomal RNA. This is Small ribosomal subunit protein uS17 from Maricaulis maris (strain MCS10) (Caulobacter maris).